Reading from the N-terminus, the 82-residue chain is Cytochrome b559 subunit alpha (82 aa).

Residues 21–35 (VIHSITIPALFIAGW) form a helical membrane-spanning segment. Position 23 (His-23) interacts with heme.

This sequence belongs to the PsbE/PsbF family. Heterodimer of an alpha subunit and a beta subunit. PSII is composed of 1 copy each of membrane proteins PsbA, PsbB, PsbC, PsbD, PsbE, PsbF, PsbH, PsbI, PsbJ, PsbK, PsbL, PsbM, PsbT, PsbX, PsbY, PsbZ, Psb30/Ycf12, peripheral proteins PsbO, CyanoQ (PsbQ), PsbU, PsbV and a large number of cofactors. It forms dimeric complexes. Heme b serves as cofactor.

The protein resides in the cellular thylakoid membrane. Functionally, this b-type cytochrome is tightly associated with the reaction center of photosystem II (PSII). PSII is a light-driven water:plastoquinone oxidoreductase that uses light energy to abstract electrons from H(2)O, generating O(2) and a proton gradient subsequently used for ATP formation. It consists of a core antenna complex that captures photons, and an electron transfer chain that converts photonic excitation into a charge separation. The sequence is that of Cytochrome b559 subunit alpha from Nostoc punctiforme (strain ATCC 29133 / PCC 73102).